The following is a 637-amino-acid chain: Serine/threonine protein kinase ypkA (637 aa).

Positions 20 to 29 are enriched in low complexity; the sequence is TFTRSSSTST. Disordered regions lie at residues 20–63 and 104–140; these read TFTR…SLVS and SSSVRPSSSSSHSTHGQTASFAQSGRPQSTSGGINAA. Residues 40–61 show a composition bias toward polar residues; the sequence is VVSQTPSISSTNSNGINASESL. The span at 104-116 shows a compositional bias: low complexity; that stretch reads SSSVRPSSSSSHS. A compositionally biased stretch (polar residues) spans 117-136; that stretch reads THGQTASFAQSGRPQSTSGG. The Protein kinase domain maps to 294–551; that stretch reads FDLLKVVGKG…AAEIKSHHFF (258 aa). ATP is bound by residues 300 to 308 and Lys323; that span reads VGKGSFGKV. Asp417 functions as the Proton acceptor in the catalytic mechanism. The 72-residue stretch at 552 to 623 folds into the AGC-kinase C-terminal domain; it reads ANIDWRKLLQ…NRPVAGLGDA (72 aa). 2 positions are modified to phosphoserine: Ser593 and Ser612. At Tyr613 the chain carries Phosphotyrosine.

It belongs to the protein kinase superfamily. Ser/Thr protein kinase family. As to quaternary structure, interacts with the sakA MAP kinase.

It catalyses the reaction L-seryl-[protein] + ATP = O-phospho-L-seryl-[protein] + ADP + H(+). It carries out the reaction L-threonyl-[protein] + ATP = O-phospho-L-threonyl-[protein] + ADP + H(+). Its function is as follows. Serine/threonine protein kinase required for vegetative growth and conidiation. Important for fungal survival through the regulation of glycosphingolipid (GSL) biosynthesis and cross talks with MAP kinase pathways such as the cell wall integrity (CWI) and the high osmolarity glycerol (HOG) pathways. In Aspergillus fumigatus (strain ATCC MYA-4609 / CBS 101355 / FGSC A1100 / Af293) (Neosartorya fumigata), this protein is Serine/threonine protein kinase ypkA.